We begin with the raw amino-acid sequence, 426 residues long: tRNA modification GTPase MnmE (426 aa).

Residues R20, E77, and M117 each coordinate (6S)-5-formyl-5,6,7,8-tetrahydrofolate. The TrmE-type G domain maps to 213-350 (GFEVAILGAP…LLTDIEGVLS (138 aa)). N223 lines the K(+) pocket. GTP is bound by residues 223 to 228 (NAGKST), 242 to 248 (SDVPGTT), and 267 to 270 (DTAG). S227 contacts Mg(2+). K(+)-binding residues include S242, V244, and T247. Mg(2+) is bound at residue T248. A (6S)-5-formyl-5,6,7,8-tetrahydrofolate-binding site is contributed by K426.

This sequence belongs to the TRAFAC class TrmE-Era-EngA-EngB-Septin-like GTPase superfamily. TrmE GTPase family. In terms of assembly, homodimer. Heterotetramer of two MnmE and two MnmG subunits. K(+) is required as a cofactor.

The protein resides in the cytoplasm. Exhibits a very high intrinsic GTPase hydrolysis rate. Involved in the addition of a carboxymethylaminomethyl (cmnm) group at the wobble position (U34) of certain tRNAs, forming tRNA-cmnm(5)s(2)U34. This Jannaschia sp. (strain CCS1) protein is tRNA modification GTPase MnmE.